A 564-amino-acid chain; its full sequence is MSDKKLSDNERLKTQSNYLRGTIQDDLADPLTGGFVADNFQLIRFHGMYQQDDRDIRQERIAQKLEPLHTVMLRVRLPGGIITPHQWLGIDAFAREHTLYGSIRITNRQTVQLHGVLKDDIKPVHKLLNHLGLDSRATAGDVNRNVLCTANPVESVLHRQSWEWAKKISEHLLPRTNAYAEVWLDKEKIIQPDDEPILGKSYLPRKFKTAVVIPPQNDVDIHANDLSFVAIGDGDQLVGFNVLMGGGLAMTQGDTSTYPRLATEFGFIPLAHTLAIAEAVVSTQRDWGNRENRRNAKTKYTLERVGADVFKAEVERRSGVTFSPLKPYVFSERGDRIGWVEGIDGKYHLTLFIPSGRLLDKPGLPNKSGIAAIARVHNGDFRLTANQNIIIAGVASDDKAQIDALARQYGLLDSSLSSQRKDSMACVSFPTCPLAMAEAERVLPDVVSQIEHLLHKYGVGDESFVFRITGCPNGCGRAMLAEVGLIGRAVGRYSLYIGGNREGTRIPRLYKDNIDVPTLFDEIEKLIALWAKERNIGEGFGDFVIRAKIIMPVINAPVDFHTAV.

[4Fe-4S] cluster contacts are provided by cysteine 426, cysteine 432, cysteine 471, and cysteine 475. Siroheme is bound at residue cysteine 475.

It belongs to the nitrite and sulfite reductase 4Fe-4S domain family. As to quaternary structure, alpha(8)-beta(8). The alpha component is a flavoprotein, the beta component is a hemoprotein. The cofactor is siroheme. [4Fe-4S] cluster is required as a cofactor.

It catalyses the reaction hydrogen sulfide + 3 NADP(+) + 3 H2O = sulfite + 3 NADPH + 4 H(+). The protein operates within sulfur metabolism; hydrogen sulfide biosynthesis; hydrogen sulfide from sulfite (NADPH route): step 1/1. In terms of biological role, component of the sulfite reductase complex that catalyzes the 6-electron reduction of sulfite to sulfide. This is one of several activities required for the biosynthesis of L-cysteine from sulfate. This is Sulfite reductase [NADPH] hemoprotein beta-component 1 from Pectobacterium carotovorum subsp. carotovorum (strain PC1).